A 445-amino-acid polypeptide reads, in one-letter code: MVSFRGLTTLTLLFTKLVNCNPVSTKNRDSIQFIYKEKDSIYSAINNQAINEKIHGVNLGGWLVLEPYITPSLFETFRTNPYNDDGIPVDEYHFCEKLGYEKAKERLYSHWSTFYKEEDFAKIASQGFNLVRIPIGYWAFTTLSHDPYVTAEQEYFLDRAIDWARKYGLKVWIDLHGAAGSQNGFDNSGLRDSYKFLEDENLSATMKALTYILSKYSTDVYLDTVIGIELLNEPLGPVIDMERLKNLLLKPAYDYLRNKINSNQIIVIHDAFQPYHYWDGFLNDEKNEYGVIIDHHHYQVFSQVELTRKMNERIKIACQWGKDAVSEKHWSVAGEFSAALTDCTKWLNGVGLGARYDGSWTKDNEKSHYINTCANNENIALWPEERKQNTRKFIEAQLDAFEMTGGWIMWCYKTENSIEWDVEKLIQLNIFPQPINDRKYPNQCH.

The first 21 residues, 1-21 (MVSFRGLTTLTLLFTKLVNCN), serve as a signal peptide directing secretion. N-linked (GlcNAc...) asparagine glycosylation is present at N201. E233 acts as the Proton donor in catalysis. Residue E335 is the Nucleophile of the active site.

Belongs to the glycosyl hydrolase 5 (cellulase A) family.

Its subcellular location is the secreted. It carries out the reaction Successive hydrolysis of beta-D-glucose units from the non-reducing ends of (1-&gt;3)-beta-D-glucans, releasing alpha-glucose.. Probably involved in the processes of spore formation and contributes to ascospore thermoresistance by participating in the morphogenesis of ascospore walls. The enzyme may do this by modifying glucan linkages in the developing ascospore wall, thus strengthening it or lending it plasticity. In Saccharomyces cerevisiae (strain ATCC 204508 / S288c) (Baker's yeast), this protein is Sporulation-specific glucan 1,3-beta-glucosidase (SPR1).